The chain runs to 105 residues: MIKYVLISALLVVAVYSFTIEDSEDALLEEAEDELDTEEERRMALPPGAVCNGHKSDCQCFGAKYKCSCPFLWRFRRSAKCHCKKGWAWTAIKKRSCHNRYQWSG.

The N-terminal stretch at 1–17 (MIKYVLISALLVVAVYS) is a signal peptide. Residues 18–41 (FTIEDSEDALLEEAEDELDTEEER) constitute a propeptide that is removed on maturation. 4 disulfides stabilise this stretch: cysteine 51–cysteine 67, cysteine 58–cysteine 97, cysteine 60–cysteine 83, and cysteine 69–cysteine 81.

The protein belongs to the neurotoxin 04 (omega-agtx) family. 01 (type I omega-agtx) subfamily. As to expression, expressed by the venom gland.

It is found in the secreted. Insecticidal to house crickets. It induces an excitatory slow-onset impact that leads to irreversible spastic paralysis. It also modifies human voltage-gated potassium channel Kv1.5/KCNA5. Most likely, it binds to the voltage-sensing domain of the channel, suggesting it does not block the pore but prevents its opening at physiological membrane potentials. The recombinant peptide binds to the channel in an irreversible manner and slows down the hKv1.5 current activation kinetics. It is not toxic to mice, when intracranially injected (at 0.5 ug/g mouse). The protein is U2-lycotoxin-Ls1c of Lycosa singoriensis (Wolf spider).